The following is a 542-amino-acid chain: CTP synthase (542 aa).

The segment at M1–L266 is amidoligase domain. CTP is bound at residue S14. S14 contributes to the UTP binding site. ATP is bound by residues S15–I20 and D72. Mg(2+) is bound by residues D72 and E140. Residues D147–E149, K187–Q192, and K223 contribute to the CTP site. Residues K187–Q192 and K223 contribute to the UTP site. Position 239–241 (K239–V241) interacts with ATP. Residues V291–K542 enclose the Glutamine amidotransferase type-1 domain. Residue G352 coordinates L-glutamine. C379 functions as the Nucleophile; for glutamine hydrolysis in the catalytic mechanism. L-glutamine contacts are provided by residues L380–Q383, E403, and R470. Active-site residues include H515 and E517.

This sequence belongs to the CTP synthase family. As to quaternary structure, homotetramer.

It carries out the reaction UTP + L-glutamine + ATP + H2O = CTP + L-glutamate + ADP + phosphate + 2 H(+). It catalyses the reaction L-glutamine + H2O = L-glutamate + NH4(+). The catalysed reaction is UTP + NH4(+) + ATP = CTP + ADP + phosphate + 2 H(+). It functions in the pathway pyrimidine metabolism; CTP biosynthesis via de novo pathway; CTP from UDP: step 2/2. Its activity is regulated as follows. Allosterically activated by GTP, when glutamine is the substrate; GTP has no effect on the reaction when ammonia is the substrate. The allosteric effector GTP functions by stabilizing the protein conformation that binds the tetrahedral intermediate(s) formed during glutamine hydrolysis. Inhibited by the product CTP, via allosteric rather than competitive inhibition. In terms of biological role, catalyzes the ATP-dependent amination of UTP to CTP with either L-glutamine or ammonia as the source of nitrogen. Regulates intracellular CTP levels through interactions with the four ribonucleotide triphosphates. The polypeptide is CTP synthase (Pasteurella multocida (strain Pm70)).